Reading from the N-terminus, the 341-residue chain is GDP-fucose transporter 1 (341 aa).

Helical transmembrane passes span 17–37, 41–61, 71–91, 103–123, 132–152, 156–176, 187–207, 231–251, 260–280, and 283–303; these read LVIG…LAIT, YPGL…YLLG, FTWD…LAIF, DTFI…DTVF, LTFL…ATDS, LTAY…MVYI, IWGL…VFWF, AFSS…FGFA, AFTV…VLIW, and HATP…VGYQ. The interval 316–341 is disordered; the sequence is SEKDSEKGEEDEELTQLVPGKLASVV.

It belongs to the nucleotide-sugar transporter family. GDP-Mannose:GMP antiporter (GMA) (TC 2.A.7.13) subfamily. As to expression, ubiquitous.

It is found in the golgi apparatus membrane. Its function is as follows. Acts as the major nucleotide-sugar transporter for the import of GDP-Fucose into the Golgi lumen. Transports GDP-Fucose in a strict counter-exchange mode. Is required for proper plant growth and development. Also acts as a GDP-mannose transporter that may be involved in the import of GDP-mannose from the cytoplasm into the Golgi lumen. The protein is GDP-fucose transporter 1 of Arabidopsis thaliana (Mouse-ear cress).